The primary structure comprises 508 residues: Photosystem II CP47 reaction center protein (508 aa).

The next 6 membrane-spanning stretches (helical) occupy residues 21-36 (SVHIMHTALVAGWAGS), 101-115 (IVFSGLCFLAAIWHW), 140-156 (GIHLFLSGVACFGFGAF), 203-218 (IAAGTLGILAGLFHLS), 237-252 (VLSSSIAAVFFAAFVV), and 457-472 (SFALLFFFGHIWHGAR).

Belongs to the PsbB/PsbC family. PsbB subfamily. As to quaternary structure, PSII is composed of 1 copy each of membrane proteins PsbA, PsbB, PsbC, PsbD, PsbE, PsbF, PsbH, PsbI, PsbJ, PsbK, PsbL, PsbM, PsbT, PsbX, PsbY, PsbZ, Psb30/Ycf12, at least 3 peripheral proteins of the oxygen-evolving complex and a large number of cofactors. It forms dimeric complexes. Requires Binds multiple chlorophylls. PSII binds additional chlorophylls, carotenoids and specific lipids. as cofactor.

The protein localises to the plastid. Its subcellular location is the chloroplast thylakoid membrane. In terms of biological role, one of the components of the core complex of photosystem II (PSII). It binds chlorophyll and helps catalyze the primary light-induced photochemical processes of PSII. PSII is a light-driven water:plastoquinone oxidoreductase, using light energy to abstract electrons from H(2)O, generating O(2) and a proton gradient subsequently used for ATP formation. This Acorus calamus var. americanus (American sweet flag) protein is Photosystem II CP47 reaction center protein.